The primary structure comprises 131 residues: Large ribosomal subunit protein bL19 (131 aa).

The protein belongs to the bacterial ribosomal protein bL19 family.

Functionally, this protein is located at the 30S-50S ribosomal subunit interface and may play a role in the structure and function of the aminoacyl-tRNA binding site. The chain is Large ribosomal subunit protein bL19 from Caulobacter sp. (strain K31).